A 325-amino-acid polypeptide reads, in one-letter code: Thioredoxin reductase (325 aa).

Residues 10-13, 39-40, Gln44, Asn53, Val86, Cys143, Asp286, and 293-295 contribute to the FAD site; these read SGPS, IA, and RQA. Residues Cys140 and Cys143 are joined by a disulfide bond.

It belongs to the class-II pyridine nucleotide-disulfide oxidoreductase family. Homodimer. It depends on FAD as a cofactor.

Its subcellular location is the cytoplasm. It carries out the reaction [thioredoxin]-dithiol + NADP(+) = [thioredoxin]-disulfide + NADPH + H(+). The sequence is that of Thioredoxin reductase (TRR1) from Pneumocystis carinii.